The following is a 189-amino-acid chain: Interferon alpha-14 (189 aa).

An N-terminal signal peptide occupies residues 1–23 (MALPFALMMALVVLSCKSSCSLG). Disulfide bonds link Cys-24-Cys-122 and Cys-52-Cys-162. A glycan (N-linked (GlcNAc...) asparagine) is linked at Asn-95.

The protein belongs to the alpha/beta interferon family.

It localises to the secreted. Functionally, produced by macrophages, IFN-alpha have antiviral activities. Interferon stimulates the production of two enzymes: a protein kinase and an oligoadenylate synthetase. The protein is Interferon alpha-14 (IFNA14) of Homo sapiens (Human).